Consider the following 679-residue polypeptide: FAST kinase domain-containing protein 2, mitochondrial (679 aa).

A phosphoserine mark is found at Ser113 and Ser126. An RAP domain is found at 607–664 (VAVLCVPKSAYCLNSNHLRGLMAMKIRHLNVMGFHVILIHNWELKKLKMEDAVTFVRK).

The protein belongs to the FAST kinase family. Monomer. Found in a complex with GRSF1, DDX28, DHX30 and FASTKD5. Associates with the 16S mitochondrial rRNA (16S mt-rRNA). Forms a regulatory protein-RNA complex, consisting of RCC1L, NGRN, RPUSD3, RPUSD4, TRUB2, FASTKD2 and 16S mt-rRNA.

It localises to the mitochondrion matrix. Its subcellular location is the mitochondrion nucleoid. Functionally, plays an important role in assembly of the mitochondrial large ribosomal subunit. As a component of a functional protein-RNA module, consisting of RCC1L, NGRN, RPUSD3, RPUSD4, TRUB2, FASTKD2 and 16S mitochondrial ribosomal RNA (16S mt-rRNA), controls 16S mt-rRNA abundance and is required for intra-mitochondrial translation. May play a role in mitochondrial apoptosis. This chain is FAST kinase domain-containing protein 2, mitochondrial (Fastkd2), found in Rattus norvegicus (Rat).